A 213-amino-acid chain; its full sequence is LexA repressor 2 (213 aa).

Positions 27–47 (QTEIARAFGFKGVRAAQYHLE) form a DNA-binding region, H-T-H motif. Residues S133 and K170 each act as for autocatalytic cleavage activity in the active site.

This sequence belongs to the peptidase S24 family. As to quaternary structure, homodimer.

The catalysed reaction is Hydrolysis of Ala-|-Gly bond in repressor LexA.. Represses a number of genes involved in the response to DNA damage (SOS response), including recA and lexA. In the presence of single-stranded DNA, RecA interacts with LexA causing an autocatalytic cleavage which disrupts the DNA-binding part of LexA, leading to derepression of the SOS regulon and eventually DNA repair. This chain is LexA repressor 2, found in Xanthomonas campestris pv. campestris (strain ATCC 33913 / DSM 3586 / NCPPB 528 / LMG 568 / P 25).